Consider the following 298-residue polypeptide: MTKKMDIQTMILTLQKFWGDKGCMLMQAYDVEKGAGTMSPYTFLRAIGPEPWNAAYVEPSRRPADGRYGENPNRLFQHHQFQVVMKPSPENIQEYYLDSLAALGINPLEHDIRFVEDNWENPSMGCAGVGWEVWLDGMEVSQFTYFQVVGGLEVSPVTSEITYGVERLASYIQDVNSVFDLEWGDGVLYGDIFKEPEYEHSKYAFEVSNQEMLLKFFDAYEKEAWRLMDLGLVHPAYDYILKCSHTFNLLDARGAVSVTERAGYMSRIRKMAHKVARAFVAERKKLGFPLLQHQTEVE.

This sequence belongs to the class-II aminoacyl-tRNA synthetase family. As to quaternary structure, tetramer of two alpha and two beta subunits.

The protein resides in the cytoplasm. It carries out the reaction tRNA(Gly) + glycine + ATP = glycyl-tRNA(Gly) + AMP + diphosphate. The polypeptide is Glycine--tRNA ligase alpha subunit (Lacticaseibacillus paracasei (strain ATCC 334 / BCRC 17002 / CCUG 31169 / CIP 107868 / KCTC 3260 / NRRL B-441) (Lactobacillus paracasei)).